The chain runs to 793 residues: Flavin carrier protein 1 (793 aa).

The N-terminal stretch at 1–21 (MQVLVTLWCLICTCLVLPVAA) is a signal peptide. Residues 22-163 (KKRTLTASSL…FFSNGKTVSQ (142 aa)) are Lumenal-facing. N-linked (GlcNAc...) asparagine glycosylation occurs at Asn-143. The helical transmembrane segment at 164–184 (IGVKWVTAVIAGIGLLTSAVL) threads the bilayer. The Cytoplasmic segment spans residues 185 to 194 (STFGNSTAAS). The chain crosses the membrane as a helical span at residues 195–215 (HISANTMSLFLYFQSVAVVAM). The Lumenal segment spans residues 216–223 (QHVDSVPP). The helical transmembrane segment at 224–244 (IAAAWSENLAWSMGLIRITFM) threads the bilayer. Topologically, residues 245-249 (QKIFR) are cytoplasmic. The helical transmembrane segment at 250 to 272 (WYVEATGGSASLYLTATTMSVLT) threads the bilayer. Residues 273 to 317 (QRGLDYLKNTSVYKRAENVLYGNSNTLIFRGIKRMGYRMKIENTA) are Lumenal-facing. Asn-281 carries an N-linked (GlcNAc...) asparagine glycan. Residues 318 to 338 (IVCTGFTFFVLCGYFLAGFIM) form a helical membrane-spanning segment. The Cytoplasmic segment spans residues 339-372 (ACKYSIELCIRCGWMRSDRFYQFRKNWRSVLKGS). A helical transmembrane segment spans residues 373–393 (LLRYIYIGFTQLTILSFWEFT). Residues 394-397 (ERDS) lie on the Lumenal side of the membrane. Residues 398-418 (AGVIVIACLFIVLSCGLMAWA) traverse the membrane as a helical segment. Residues 419-461 (AYRTIFFASKSVEMYNNPAALLYGDEYVLNKYGFFYTMFNAKH) lie on the Cytoplasmic side of the membrane. A helical transmembrane segment spans residues 462 to 482 (YWWNALLTTYILVKALFVGFA). Residues 483–484 (QA) lie on the Lumenal side of the membrane. A helical membrane pass occupies residues 485-505 (SGKTQALAIFIIDLAYFVAII). The Cytoplasmic portion of the chain corresponds to 506-516 (RYKPYLDRPTN). A helical membrane pass occupies residues 517-537 (IVNIFICTVTLVNSFLFMFFS). Over 538–551 (NLFNQKYAVSAIMG) the chain is Lumenal. The helical transmembrane segment at 552–572 (WVFFIMNAAFSLLLLLMILAF) threads the bilayer. Residues 573 to 793 (TTIILFSKNP…KANILDPDYL (221 aa)) lie on the Cytoplasmic side of the membrane. Ser-610 bears the Phosphoserine mark. Phosphothreonine is present on Thr-626. Disordered regions lie at residues 649–674 (YDDE…PTFS) and 689–731 (KLGS…QESE). Residues 701-719 (ITQQEVSPDRASSSPNSKS) show a composition bias toward polar residues. Residues Ser-771 and Ser-774 each carry the phosphoserine modification.

The protein belongs to the transient receptor potential (TRP) ion channel family.

The protein resides in the endoplasmic reticulum membrane. Functionally, may be responsible for the transport of FAD into the endoplasmic reticulum lumen, where it is required for oxidative protein folding. The protein is Flavin carrier protein 1 (FLC1) of Saccharomyces cerevisiae (strain ATCC 204508 / S288c) (Baker's yeast).